A 297-amino-acid chain; its full sequence is Esterase LipU (297 aa).

Active-site residues include serine 140, glutamate 239, and histidine 269.

The protein belongs to the 'GDXG' lipolytic enzyme family.

It localises to the secreted. It carries out the reaction a fatty acid ester + H2O = an aliphatic alcohol + a fatty acid + H(+). The catalysed reaction is a butanoate ester + H2O = an aliphatic alcohol + butanoate + H(+). The enzyme catalyses an acetyl ester + H2O = an aliphatic alcohol + acetate + H(+). It catalyses the reaction decanoate ester + H2O = decanoate + an aliphatic alcohol + H(+). It carries out the reaction an octanoate ester + H2O = an aliphatic alcohol + octanoate + H(+). The catalysed reaction is a dodecanoate ester + H2O = an aliphatic alcohol + dodecanoate + H(+). The enzyme catalyses hexadecanoate ester + H2O = an aliphatic alcohol + hexadecanoate + H(+). Its activity is regulated as follows. Inhibited by the ionic detergent SDS and by the serine protease inhibitor PMSF. Inhibited by the FDA approved drugs Diosmin, Acarbose and Ouabain. These drugs remain bound in the active site pocket and could be probable drug candidates to combat TB disease. Esterase that shows preference for short chain fatty acids. Contributes to the growth of M.tuberculosis during the nutritive stress. Elicits strong humoral response in both extrapulmonary and relapsed cases of tuberculosis patients. In Mycobacterium tuberculosis (strain ATCC 25618 / H37Rv), this protein is Esterase LipU.